The primary structure comprises 102 residues: Small ribosomal subunit protein uS10 (102 aa).

This sequence belongs to the universal ribosomal protein uS10 family. In terms of assembly, part of the 30S ribosomal subunit.

Involved in the binding of tRNA to the ribosomes. The sequence is that of Small ribosomal subunit protein uS10 from Oceanobacillus iheyensis (strain DSM 14371 / CIP 107618 / JCM 11309 / KCTC 3954 / HTE831).